A 133-amino-acid polypeptide reads, in one-letter code: Small ribosomal subunit protein bS16 (133 aa).

Basic and acidic residues predominate over residues 83–101 (KRDARSNPKKAEPGKKAQE). Residues 83–102 (KRDARSNPKKAEPGKKAQER) form a disordered region.

The protein belongs to the bacterial ribosomal protein bS16 family.

In Mesorhizobium japonicum (strain LMG 29417 / CECT 9101 / MAFF 303099) (Mesorhizobium loti (strain MAFF 303099)), this protein is Small ribosomal subunit protein bS16.